Reading from the N-terminus, the 781-residue chain is Mitochondrial inner membrane m-AAA protease component paraplegin (781 aa).

A mitochondrion-targeting transit peptide spans 1–43 (MAAALLLLRALRQSPEPGPWRLWAQLSGRSPGLFSGAGGRRPY). The propeptide at 44–105 (VVRGTPIGLA…GSTLYFNTSG (62 aa)) is removed in mature form. The tract at residues 105–134 (GLKQKNKDDDKPKGKAPEDDEEERRRKERE) is disordered. Topologically, residues 106-144 (LKQKNKDDDKPKGKAPEDDEEERRRKEREDQMYRERLRT) are mitochondrial matrix. Over residues 109–134 (KNKDDDKPKGKAPEDDEEERRRKERE) the composition is skewed to basic and acidic residues. The helical transmembrane segment at 145–165 (LFIIAIVMSLLNSLSTSGGSI) threads the bilayer. At 166 to 248 (SWADFVNEML…DRIPVSYKRT (83 aa)) the chain is on the mitochondrial intermembrane side. Residues 249–269 (GFFGNALYALGMTAVGLAILW) form a helical membrane-spanning segment. The Mitochondrial matrix segment spans residues 270–781 (YVFRLAGMTG…ASGEEEAPAP (512 aa)). ATP is bound by residues Ala312, Gly352, Cys353, Gly354, Lys355, Thr356, and Leu357. Tyr505 carries the post-translational modification 3'-nitrotyrosine. His574 contributes to the Zn(2+) binding site. Glu575 is an active-site residue. His578 and Asp650 together coordinate Zn(2+). Positions 701–781 (HEARLLVARA…ASGEEEAPAP (81 aa)) are interaction with PPIF.

It in the N-terminal section; belongs to the AAA ATPase family. This sequence in the C-terminal section; belongs to the peptidase M41 family. In terms of assembly, forms heterooligomers with AFG3L2; the m-AAA protease is composed of heterohexamers of AFG3L2 and SPG7. Component of the mitochondrial permeability transition pore complex (mPTPC), at least composed of SPG7, VDAC1 and PPIF. Interacts with MAIP1. Zn(2+) serves as cofactor. In terms of processing, upon import into the mitochondrion, the N-terminal transit peptide is cleaved by the mitochondrial-processing peptidase (MPP) to generate an intermediate form which undergoes a second proteolytic cleavage mediated by proteases AFG3L2 removing an additional N-terminal fragment to generate the proteolytically active mature form.

It localises to the mitochondrion inner membrane. The enzyme catalyses ATP + H2O = ADP + phosphate + H(+). In terms of biological role, catalytic component of the m-AAA protease, a protease that plays a key role in proteostasis of inner mitochondrial membrane proteins, and which is essential for axonal and neuron development. SPG7 possesses both ATPase and protease activities: the ATPase activity is required to unfold substrates, threading them into the internal proteolytic cavity for hydrolysis into small peptide fragments. The m-AAA protease exerts a dual role in the mitochondrial inner membrane: it mediates the processing of specific regulatory proteins and ensures protein quality control by degrading misfolded polypeptides. Mediates protein maturation of the mitochondrial ribosomal subunit MRPL32/bL32m by catalyzing the cleavage of the presequence of MRPL32/bL32m prior to assembly into the mitochondrial ribosome. Acts as a regulator of calcium in neurons by mediating degradation of SMDT1/EMRE before its assembly with the uniporter complex, limiting the availability of SMDT1/EMRE for MCU assembly and promoting efficient assembly of gatekeeper subunits with MCU. Also regulates mitochondrial calcium by catalyzing degradation of MCU. Plays a role in the formation and regulation of the mitochondrial permeability transition pore (mPTP) and its proteolytic activity is dispensable for this function. This chain is Mitochondrial inner membrane m-AAA protease component paraplegin (Spg7), found in Rattus norvegicus (Rat).